Consider the following 213-residue polypeptide: Adenylate kinase (213 aa).

14–19 (GSGKGT) is an ATP binding site. Residues 34-63 (SSGNLLRSAIKASTPLGIKASEYIDEGQLV) are NMP. AMP-binding positions include Ser35, Arg40, 61–63 (QLV), 89–92 (GFPR), and Gln96. Residues 129-162 (SRFICPSCNFVYNQSQGFRECPTCHSELVRRSDD) form an LID region. Residue Arg130 coordinates ATP. Zn(2+) is bound by residues Cys133 and Cys136. 139-140 (VY) contacts ATP. The Zn(2+) site is built by Cys149 and Cys152. AMP is bound by residues Arg159 and Arg170. Lys198 serves as a coordination point for ATP.

Belongs to the adenylate kinase family. In terms of assembly, monomer.

It is found in the cytoplasm. The enzyme catalyses AMP + ATP = 2 ADP. It participates in purine metabolism; AMP biosynthesis via salvage pathway; AMP from ADP: step 1/1. In terms of biological role, catalyzes the reversible transfer of the terminal phosphate group between ATP and AMP. Plays an important role in cellular energy homeostasis and in adenine nucleotide metabolism. This Chlamydia felis (strain Fe/C-56) (Chlamydophila felis) protein is Adenylate kinase.